The primary structure comprises 873 residues: Leucine--tRNA ligase (873 aa).

The 'HIGH' region signature appears at 42-52; it reads PYPSGKLHMGH. The short motif at 628-632 is the 'KMSKS' region element; it reads KMSKS. Lysine 631 contacts ATP.

This sequence belongs to the class-I aminoacyl-tRNA synthetase family.

The protein localises to the cytoplasm. The catalysed reaction is tRNA(Leu) + L-leucine + ATP = L-leucyl-tRNA(Leu) + AMP + diphosphate. This chain is Leucine--tRNA ligase, found in Azoarcus sp. (strain BH72).